The sequence spans 393 residues: Sulfate adenylyltransferase (393 aa).

The protein belongs to the sulfate adenylyltransferase family.

The enzyme catalyses sulfate + ATP + H(+) = adenosine 5'-phosphosulfate + diphosphate. Its pathway is sulfur metabolism; hydrogen sulfide biosynthesis; sulfite from sulfate: step 1/3. This Symbiobacterium thermophilum (strain DSM 24528 / JCM 14929 / IAM 14863 / T) protein is Sulfate adenylyltransferase.